The sequence spans 130 residues: Small ribosomal subunit protein uS9 (130 aa).

This sequence belongs to the universal ribosomal protein uS9 family.

The polypeptide is Small ribosomal subunit protein uS9 (Thioalkalivibrio sulfidiphilus (strain HL-EbGR7)).